The primary structure comprises 513 residues: Na(+)/H(+) antiporter NhaB (513 aa).

Transmembrane regions (helical) follow at residues 21 to 41 (LCII…SPFI), 43 to 63 (GWTL…CYPL), 88 to 108 (IIAN…IYFM), 137 to 157 (AAFL…ISVG), 202 to 222 (LLMH…VGEP), 235 to 255 (FIEF…CGIA), 299 to 318 (MAIQ…LHLA), 322 to 344 (IIGL…HAIG), 350 to 370 (PMPF…IVDL), 389 to 409 (LALF…VFVG), and 477 to 497 (MALP…EYLL).

Belongs to the NhaB Na(+)/H(+) (TC 2.A.34) antiporter family.

It localises to the cell inner membrane. It catalyses the reaction 2 Na(+)(in) + 3 H(+)(out) = 2 Na(+)(out) + 3 H(+)(in). Na(+)/H(+) antiporter that extrudes sodium in exchange for external protons. The sequence is that of Na(+)/H(+) antiporter NhaB from Haemophilus ducreyi (strain 35000HP / ATCC 700724).